The following is a 100-amino-acid chain: MELTPREKDKLLLYTAALVAERRKARGLKLNYPEAMAYLSMEIVEGARDGRSVAELMAYGRTLLSRDDVMEGIPEMIPEVQVEATFPDGTKLVTVHNPIP.

It belongs to the urease gamma subunit family. In terms of assembly, heterotrimer of UreA (gamma), UreB (beta) and UreC (alpha) subunits. Three heterotrimers associate to form the active enzyme.

It is found in the cytoplasm. The catalysed reaction is urea + 2 H2O + H(+) = hydrogencarbonate + 2 NH4(+). The protein operates within nitrogen metabolism; urea degradation; CO(2) and NH(3) from urea (urease route): step 1/1. The chain is Urease subunit gamma from Hahella chejuensis (strain KCTC 2396).